Reading from the N-terminus, the 497-residue chain is Transmembrane protein 200A (497 aa).

Over 1-61 (MIATGGVITG…RGKIRLYSAS (61 aa)) the chain is Cytoplasmic. Residues 20-30 (TRSQYHLSAQS) show a composition bias toward polar residues. The disordered stretch occupies residues 20 to 44 (TRSQYHLSAQSPGPAPEKKTTKRKP). Residues 62-82 (GFFLVLGVLILMAGIAMAVLG) form a helical membrane-spanning segment. Topologically, residues 83-127 (YWPHKDQPKAPETKMSANNTQSFGREQAGSIAQFLEQHMHSEKMK) are extracellular. N100 carries an N-linked (GlcNAc...) asparagine glycan. A helical membrane pass occupies residues 128–148 (MLGPFTMGIGIFIFICANAIL). At 149 to 497 (HENRDRETKV…LKRGTSETRF (349 aa)) the chain is on the cytoplasmic side. Residues 353–375 (SNSATESASSTSSRSSLSPGSTS) are compositionally biased toward low complexity. Disordered regions lie at residues 353-385 (SNSA…GAAR) and 400-438 (HSKS…GYTR). Positions 427 to 438 (RLDRSNSKGYTR) are enriched in basic and acidic residues.

It belongs to the TMEM200 family.

The protein localises to the membrane. The polypeptide is Transmembrane protein 200A (tmem200a) (Danio rerio (Zebrafish)).